The following is a 739-amino-acid chain: Exocyst complex component 3-like protein (739 aa).

2 disordered regions span residues 1–21 and 698–718; these read MDSK…PEWP and AALS…RRAL. Residues 1–370 are mediates interaction with EXOC2, EXOC4 and EXOC5; the sequence is MDSKIQPTLR…DVSQLEPLLT (370 aa).

It belongs to the SEC6 family. Interacts with EXOC2, EXOC4 and EXOC5; may be part of the exocyst. In terms of tissue distribution, ubiquitously expressed.

It localises to the cytoplasmic vesicle. Its subcellular location is the secretory vesicle. Functionally, as part of the exocyst, may play a role in regulated exocytosis of insulin granules. This is Exocyst complex component 3-like protein (Exoc3l1) from Mus musculus (Mouse).